Reading from the N-terminus, the 566-residue chain is UvrABC system protein C (566 aa).

Residues 16–93 form the GIY-YIG domain; the sequence is EKPGVYLFKK…IQQYKPRYNV (78 aa). The region spanning 199–234 is the UVR domain; that stretch reads AEVLPKLYEKIEEFSKELMFEKCAHIRDQIIALENL.

The protein belongs to the UvrC family. As to quaternary structure, interacts with UvrB in an incision complex.

It is found in the cytoplasm. Functionally, the UvrABC repair system catalyzes the recognition and processing of DNA lesions. UvrC both incises the 5' and 3' sides of the lesion. The N-terminal half is responsible for the 3' incision and the C-terminal half is responsible for the 5' incision. The polypeptide is UvrABC system protein C (Aquifex aeolicus (strain VF5)).